The following is a 245-amino-acid chain: Orotidine 5'-phosphate decarboxylase (245 aa).

Residues Asp-22, Lys-44, 71–80 (DLKFHDIPNT), Thr-131, Arg-192, Gln-201, Gly-221, and Arg-222 each bind substrate. Lys-73 (proton donor) is an active-site residue.

Belongs to the OMP decarboxylase family. Type 1 subfamily. As to quaternary structure, homodimer.

It carries out the reaction orotidine 5'-phosphate + H(+) = UMP + CO2. The protein operates within pyrimidine metabolism; UMP biosynthesis via de novo pathway; UMP from orotate: step 2/2. Its function is as follows. Catalyzes the decarboxylation of orotidine 5'-monophosphate (OMP) to uridine 5'-monophosphate (UMP). The sequence is that of Orotidine 5'-phosphate decarboxylase from Shigella flexneri serotype 5b (strain 8401).